The following is a 98-amino-acid chain: UPF0251 protein Sbal_3699 (98 aa).

The protein belongs to the UPF0251 family.

The sequence is that of UPF0251 protein Sbal_3699 from Shewanella baltica (strain OS155 / ATCC BAA-1091).